A 200-amino-acid polypeptide reads, in one-letter code: Superoxide dismutase [Mn] 1 (200 aa).

Mn(2+) contacts are provided by H29, H76, D158, and H162.

This sequence belongs to the iron/manganese superoxide dismutase family. Mn(2+) is required as a cofactor.

The enzyme catalyses 2 superoxide + 2 H(+) = H2O2 + O2. In terms of biological role, destroys superoxide anion radicals which are normally produced within the cells and which are toxic to biological systems. This chain is Superoxide dismutase [Mn] 1 (sod1), found in Haloferax volcanii (strain ATCC 29605 / DSM 3757 / JCM 8879 / NBRC 14742 / NCIMB 2012 / VKM B-1768 / DS2) (Halobacterium volcanii).